Reading from the N-terminus, the 341-residue chain is tRNA uridine(34) hydroxylase (341 aa).

A Rhodanese domain is found at 139-233 (SDPEVVLVDT…YLEEVPSTET (95 aa)). The Cysteine persulfide intermediate role is filled by Cys-193. Composition is skewed to basic and acidic residues over residues 306–316 (SLAEERGESHI) and 324–341 (IEER…QANK). A disordered region spans residues 306-341 (SLAEERGESHIGGDIQNIIEERRQEKNDKKAKQANK).

The protein belongs to the TrhO family.

It carries out the reaction uridine(34) in tRNA + AH2 + O2 = 5-hydroxyuridine(34) in tRNA + A + H2O. Functionally, catalyzes oxygen-dependent 5-hydroxyuridine (ho5U) modification at position 34 in tRNAs. The chain is tRNA uridine(34) hydroxylase from Colwellia psychrerythraea (strain 34H / ATCC BAA-681) (Vibrio psychroerythus).